The chain runs to 87 residues: Bombyxin B-10 (87 aa).

An N-terminal signal peptide occupies residues 1–19 (MKTILIFLVVISLMYSGEA). 3 disulfides stabilise this stretch: Cys-27–Cys-73, Cys-39–Cys-86, and Cys-72–Cys-77. Positions 46–64 (SGAQYAPYFWTRQYLGSRG) are cleaved as a propeptide — bombyxin B-10 C peptide.

The protein belongs to the insulin family. As to quaternary structure, heterodimer of a B chain and an A chain linked by two disulfide bonds.

It localises to the secreted. Brain peptide responsible for activation of prothoracic glands to produce ecdysone in insects. The polypeptide is Bombyxin B-10 (BBXB10) (Bombyx mori (Silk moth)).